Consider the following 400-residue polypeptide: S-adenosylmethionine synthase (400 aa).

ATP is bound at residue 136 to 141 (GTGSTD).

The protein belongs to the AdoMet synthase 2 family. Requires Mg(2+) as cofactor.

It carries out the reaction L-methionine + ATP + H2O = S-adenosyl-L-methionine + phosphate + diphosphate. The protein operates within amino-acid biosynthesis; S-adenosyl-L-methionine biosynthesis; S-adenosyl-L-methionine from L-methionine: step 1/1. In terms of biological role, catalyzes the formation of S-adenosylmethionine from methionine and ATP. This is S-adenosylmethionine synthase from Methanoregula boonei (strain DSM 21154 / JCM 14090 / 6A8).